Consider the following 61-residue polypeptide: Metallothionein-1 (61 aa).

Methionine 1 is subject to N-acetylmethionine. A beta region spans residues 1-29; it reads MDPNCSCPTGGSCTCAGSCKCKACRCPSC. 20 residues coordinate a divalent metal cation: cysteine 5, cysteine 7, cysteine 13, cysteine 15, cysteine 19, cysteine 21, cysteine 24, cysteine 26, cysteine 29, cysteine 33, cysteine 34, cysteine 36, cysteine 37, cysteine 41, cysteine 44, cysteine 48, cysteine 50, cysteine 57, cysteine 59, and cysteine 60. The tract at residues 30–61 is alpha; the sequence is KKSCCSCCPVGCAKCAQGCVCKGASDKCSCCA.

The protein belongs to the metallothionein superfamily. Type 1 family. As to quaternary structure, monomer.

Metallothioneins have a high content of cysteine residues that bind various heavy metals; these proteins are transcriptionally regulated by both heavy metals and glucocorticoids. The protein is Metallothionein-1 (MT1) of Bos taurus (Bovine).